A 123-amino-acid polypeptide reads, in one-letter code: Small ribosomal subunit protein uS12 (123 aa).

The residue at position 89 (aspartate 89) is a 3-methylthioaspartic acid.

The protein belongs to the universal ribosomal protein uS12 family. In terms of assembly, part of the 30S ribosomal subunit. Contacts proteins S8 and S17. May interact with IF1 in the 30S initiation complex.

Its function is as follows. With S4 and S5 plays an important role in translational accuracy. Functionally, interacts with and stabilizes bases of the 16S rRNA that are involved in tRNA selection in the A site and with the mRNA backbone. Located at the interface of the 30S and 50S subunits, it traverses the body of the 30S subunit contacting proteins on the other side and probably holding the rRNA structure together. The combined cluster of proteins S8, S12 and S17 appears to hold together the shoulder and platform of the 30S subunit. The protein is Small ribosomal subunit protein uS12 of Myxococcus xanthus.